Consider the following 267-residue polypeptide: Putative methylsterol monooxygenase DDB_G0270946 (267 aa).

Helical transmembrane passes span 31 to 51, 72 to 92, and 110 to 130; these read FIAH…ADFI, YCAI…MYIF, and IPYL…YFYW. Residues 119–249 form the Fatty acid hydroxylase domain; it reads SSFIIEDFYF…FTYLDKIFGT (131 aa). A Histidine box-1 motif is present at residues 132-136; it reads HRALH. The short motif at 145–149 is the Histidine box-2 element; sequence HKVHH. A Histidine box-3 motif is present at residues 224–230; it reads FHDYHHE.

This sequence belongs to the sterol desaturase family. The cofactor is Fe cation.

It localises to the endoplasmic reticulum membrane. It carries out the reaction 4,4-dimethyl-5alpha-cholest-7-en-3beta-ol + 6 Fe(II)-[cytochrome b5] + 3 O2 + 5 H(+) = 4alpha-carboxy-4beta-methyl-5alpha-cholest-7-ene-3beta-ol + 6 Fe(III)-[cytochrome b5] + 4 H2O. It functions in the pathway steroid biosynthesis; zymosterol biosynthesis; zymosterol from lanosterol: step 3/6. This Dictyostelium discoideum (Social amoeba) protein is Putative methylsterol monooxygenase DDB_G0270946.